The chain runs to 467 residues: ATP synthase subunit beta (467 aa).

Residue 156-163 (GGAGVGKT) coordinates ATP.

This sequence belongs to the ATPase alpha/beta chains family. F-type ATPases have 2 components, CF(1) - the catalytic core - and CF(0) - the membrane proton channel. CF(1) has five subunits: alpha(3), beta(3), gamma(1), delta(1), epsilon(1). CF(0) has three main subunits: a(1), b(2) and c(9-12). The alpha and beta chains form an alternating ring which encloses part of the gamma chain. CF(1) is attached to CF(0) by a central stalk formed by the gamma and epsilon chains, while a peripheral stalk is formed by the delta and b chains.

The protein resides in the cell membrane. The enzyme catalyses ATP + H2O + 4 H(+)(in) = ADP + phosphate + 5 H(+)(out). In terms of biological role, produces ATP from ADP in the presence of a proton gradient across the membrane. The catalytic sites are hosted primarily by the beta subunits. This is ATP synthase subunit beta from Cytobacillus firmus (Bacillus firmus).